Here is a 684-residue protein sequence, read N- to C-terminus: Divalent metal transporter 1 (684 aa).

Residues 1 to 228 (MEKDFTERST…YRNKLSLYNK (228 aa)) are Cytoplasmic-facing. The segment at 153-195 (NKRNNNNNNNNNNNNNNNNNNNNNNNNNNNNNNNNSNNVDNRK) is disordered. Low complexity predominate over residues 156 to 191 (NNNNNNNNNNNNNNNNNNNNNNNNNNNNNNNNSNNV). A helical transmembrane segment spans residues 229–247 (LRMCFNYFGPGWIVAIAYL). The Vacuolar segment spans residues 248–275 (DPGNLCSNLNVGLIRSPDPTLEKDYSGY). A helical membrane pass occupies residues 276 to 299 (YLLWIMVYGHMLGFIFQVLSMRLG). The Cytoplasmic portion of the chain corresponds to 300–319 (HVTGLDLASLCSKEFDRTTS). The helical transmembrane segment at 320-345 (TIIYVLVQIAIWGAHIQAIIGTFIAL) threads the bilayer. Residues 346–350 (NLIFG) are Vacuolar-facing. Residues 351 to 370 (ISVKVAIFYTLFEAIIYSFL) traverse the membrane as a helical segment. The Cytoplasmic segment spans residues 371–381 (ENKSLGLLENV). Residues 382–404 (LSFLVGILAVSFFVNVFMTPINF) form a helical membrane-spanning segment. Topologically, residues 405–423 (KELAISILYPRIPKGKEID) are vacuolar. The chain crosses the membrane as a helical span at residues 424 to 445 (ALALLGSIISAHIFYLHTNLTA). The Cytoplasmic portion of the chain corresponds to 446-465 (KKKSVICNDLSLRRYNTLGT). Residues 466-487 (IESGGSLFLSCLTNCIIVLTFA) form a helical membrane-spanning segment. Topologically, residues 488-515 (EVNLKSFERRDQYNLFTAYEVMRKSFGK) are vacuolar. The helical transmembrane segment at 516–534 (ISMYIWSFGLLSSGNNSSF) threads the bilayer. Topologically, residues 535-554 (MCEYASKSVVEGFLNKKINT) are cytoplasmic. A helical membrane pass occupies residues 555 to 573 (FVRVFTFRLMLFSLLYMFL). The Vacuolar segment spans residues 574 to 584 (TLNKYTLDQLT). A helical membrane pass occupies residues 585–603 (NFINVIQVLLLPMATIPLY). The Cytoplasmic segment spans residues 604 to 622 (RFSIHENVLGEFRLKKFPK). The chain crosses the membrane as a helical span at residues 623–645 (FAVFLIIIAIIISNVLLTFLDFV). The Vacuolar portion of the chain corresponds to 646 to 650 (HKETS). A helical membrane pass occupies residues 651-673 (LITIFFLVIFSFLYFGFIIYFFN). Residues 674 to 684 (IPIKKNYIQRN) are Cytoplasmic-facing.

The protein belongs to the NRAMP (TC 2.A.55) family.

The protein localises to the vacuole membrane. It carries out the reaction Fe(2+)(in) = Fe(2+)(out). Its function is as follows. Iron transporter. Required for parasite development during the blood stages. Required for apicoplast biogenesis. Required for mitochondrial polarization. The protein is Divalent metal transporter 1 of Plasmodium falciparum (isolate 3D7).